We begin with the raw amino-acid sequence, 467 residues long: Siroheme synthase 2 (467 aa).

The precorrin-2 dehydrogenase /sirohydrochlorin ferrochelatase stretch occupies residues 1 to 204 (MDYLPIFCQL…NDVALAERQI (204 aa)). NAD(+)-binding positions include 22 to 23 (EI) and 43 to 44 (CS). Ser-128 is modified (phosphoserine). The segment at 216-467 (GEVVLVGAGP…EPSQPLAQMA (252 aa)) is uroporphyrinogen-III C-methyltransferase. S-adenosyl-L-methionine is bound at residue Pro-225. Catalysis depends on Asp-248, which acts as the Proton acceptor. The active-site Proton donor is Lys-270. S-adenosyl-L-methionine is bound by residues 301–303 (GGD), Ile-306, 331–332 (TA), Met-382, and Gly-411.

The protein in the N-terminal section; belongs to the precorrin-2 dehydrogenase / sirohydrochlorin ferrochelatase family. In the C-terminal section; belongs to the precorrin methyltransferase family.

The catalysed reaction is uroporphyrinogen III + 2 S-adenosyl-L-methionine = precorrin-2 + 2 S-adenosyl-L-homocysteine + H(+). The enzyme catalyses precorrin-2 + NAD(+) = sirohydrochlorin + NADH + 2 H(+). It carries out the reaction siroheme + 2 H(+) = sirohydrochlorin + Fe(2+). It participates in cofactor biosynthesis; adenosylcobalamin biosynthesis; precorrin-2 from uroporphyrinogen III: step 1/1. The protein operates within cofactor biosynthesis; adenosylcobalamin biosynthesis; sirohydrochlorin from precorrin-2: step 1/1. It functions in the pathway porphyrin-containing compound metabolism; siroheme biosynthesis; precorrin-2 from uroporphyrinogen III: step 1/1. Its pathway is porphyrin-containing compound metabolism; siroheme biosynthesis; siroheme from sirohydrochlorin: step 1/1. It participates in porphyrin-containing compound metabolism; siroheme biosynthesis; sirohydrochlorin from precorrin-2: step 1/1. Functionally, multifunctional enzyme that catalyzes the SAM-dependent methylations of uroporphyrinogen III at position C-2 and C-7 to form precorrin-2 via precorrin-1. Then it catalyzes the NAD-dependent ring dehydrogenation of precorrin-2 to yield sirohydrochlorin. Finally, it catalyzes the ferrochelation of sirohydrochlorin to yield siroheme. The sequence is that of Siroheme synthase 2 from Serratia proteamaculans (strain 568).